The primary structure comprises 182 residues: tRNA-splicing endonuclease (182 aa).

Catalysis depends on residues Y119, H127, and K158.

Belongs to the tRNA-intron endonuclease family. Archaeal short subfamily. In terms of assembly, homotetramer; although the tetramer contains four active sites, only two participate in the cleavage. Therefore, it should be considered as a dimer of dimers.

The enzyme catalyses pretRNA = a 3'-half-tRNA molecule with a 5'-OH end + a 5'-half-tRNA molecule with a 2',3'-cyclic phosphate end + an intron with a 2',3'-cyclic phosphate and a 5'-hydroxyl terminus.. Endonuclease that removes tRNA introns. Cleaves pre-tRNA at the 5'- and 3'-splice sites to release the intron. The products are an intron and two tRNA half-molecules bearing 2',3' cyclic phosphate and 5'-OH termini. Recognizes a pseudosymmetric substrate in which 2 bulged loops of 3 bases are separated by a stem of 4 bp. This Saccharolobus islandicus (strain M.14.25 / Kamchatka #1) (Sulfolobus islandicus) protein is tRNA-splicing endonuclease.